We begin with the raw amino-acid sequence, 135 residues long: Small ribosomal subunit protein bS6 (135 aa).

The segment at 96–135 (HAEGPSIQMQKRDERERGDRGDRSDRGDRGDRGDRGGFRR) is disordered. Over residues 105 to 135 (QKRDERERGDRGDRSDRGDRGDRGDRGGFRR) the composition is skewed to basic and acidic residues.

The protein belongs to the bacterial ribosomal protein bS6 family.

Functionally, binds together with bS18 to 16S ribosomal RNA. This Cereibacter sphaeroides (strain ATCC 17029 / ATH 2.4.9) (Rhodobacter sphaeroides) protein is Small ribosomal subunit protein bS6.